We begin with the raw amino-acid sequence, 278 residues long: 4-diphosphocytidyl-2-C-methyl-D-erythritol kinase (278 aa).

Residue lysine 9 is part of the active site. 89 to 99 contacts ATP; it reads PVASGIGGGSA. Aspartate 128 is an active-site residue.

Belongs to the GHMP kinase family. IspE subfamily.

It catalyses the reaction 4-CDP-2-C-methyl-D-erythritol + ATP = 4-CDP-2-C-methyl-D-erythritol 2-phosphate + ADP + H(+). Its pathway is isoprenoid biosynthesis; isopentenyl diphosphate biosynthesis via DXP pathway; isopentenyl diphosphate from 1-deoxy-D-xylulose 5-phosphate: step 3/6. Catalyzes the phosphorylation of the position 2 hydroxy group of 4-diphosphocytidyl-2C-methyl-D-erythritol. This chain is 4-diphosphocytidyl-2-C-methyl-D-erythritol kinase, found in Cereibacter sphaeroides (strain ATCC 17029 / ATH 2.4.9) (Rhodobacter sphaeroides).